The chain runs to 219 residues: ATP-dependent dethiobiotin synthetase BioD (219 aa).

12–17 contributes to the ATP binding site; that stretch reads DLGKTH. Thr-16 is a Mg(2+) binding site. Lys-37 is an active-site residue. Ser-41 provides a ligand contact to substrate. ATP is bound by residues Asp-52, 115–118, and 175–176; these read EGAG and SE. Positions 52 and 115 each coordinate Mg(2+).

The protein belongs to the dethiobiotin synthetase family. As to quaternary structure, homodimer. Requires Mg(2+) as cofactor.

The protein resides in the cytoplasm. It catalyses the reaction (7R,8S)-7,8-diammoniononanoate + CO2 + ATP = (4R,5S)-dethiobiotin + ADP + phosphate + 3 H(+). It functions in the pathway cofactor biosynthesis; biotin biosynthesis; biotin from 7,8-diaminononanoate: step 1/2. Catalyzes a mechanistically unusual reaction, the ATP-dependent insertion of CO2 between the N7 and N8 nitrogen atoms of 7,8-diaminopelargonic acid (DAPA, also called 7,8-diammoniononanoate) to form a ureido ring. The chain is ATP-dependent dethiobiotin synthetase BioD from Caulobacter vibrioides (strain ATCC 19089 / CIP 103742 / CB 15) (Caulobacter crescentus).